The primary structure comprises 462 residues: Anthranilate synthase component 1 (462 aa).

L-tryptophan contacts are provided by residues serine 37 and 244–246 (PYM). Position 279 to 280 (279 to 280 (GT)) interacts with chorismate. Glutamate 306 is a Mg(2+) binding site. Chorismate-binding positions include tyrosine 394, arginine 414, 428-430 (GAG), and glycine 430. Glutamate 443 lines the Mg(2+) pocket.

Belongs to the anthranilate synthase component I family. In terms of assembly, heterotetramer consisting of two non-identical subunits: a beta subunit (TrpG) and a large alpha subunit (TrpE). It depends on Mg(2+) as a cofactor.

It catalyses the reaction chorismate + L-glutamine = anthranilate + pyruvate + L-glutamate + H(+). Its pathway is amino-acid biosynthesis; L-tryptophan biosynthesis; L-tryptophan from chorismate: step 1/5. Its activity is regulated as follows. Feedback inhibited by tryptophan. Its function is as follows. Part of a heterotetrameric complex that catalyzes the two-step biosynthesis of anthranilate, an intermediate in the biosynthesis of L-tryptophan. In the first step, the glutamine-binding beta subunit (TrpG) of anthranilate synthase (AS) provides the glutamine amidotransferase activity which generates ammonia as a substrate that, along with chorismate, is used in the second step, catalyzed by the large alpha subunit of AS (TrpE) to produce anthranilate. In the absence of TrpG, TrpE can synthesize anthranilate directly from chorismate and high concentrations of ammonia. This chain is Anthranilate synthase component 1 (trpE), found in Thermus thermophilus (strain ATCC 27634 / DSM 579 / HB8).